We begin with the raw amino-acid sequence, 195 residues long: Imidazoleglycerol-phosphate dehydratase (195 aa).

This sequence belongs to the imidazoleglycerol-phosphate dehydratase family.

Its subcellular location is the cytoplasm. The enzyme catalyses D-erythro-1-(imidazol-4-yl)glycerol 3-phosphate = 3-(imidazol-4-yl)-2-oxopropyl phosphate + H2O. It participates in amino-acid biosynthesis; L-histidine biosynthesis; L-histidine from 5-phospho-alpha-D-ribose 1-diphosphate: step 6/9. This chain is Imidazoleglycerol-phosphate dehydratase, found in Bordetella bronchiseptica (strain ATCC BAA-588 / NCTC 13252 / RB50) (Alcaligenes bronchisepticus).